Here is a 414-residue protein sequence, read N- to C-terminus: Serine hydroxymethyltransferase (414 aa).

Residues L121 and 125 to 127 (GHL) contribute to the (6S)-5,6,7,8-tetrahydrofolate site. K229 is modified (N6-(pyridoxal phosphate)lysine).

The protein belongs to the SHMT family. Homodimer. Pyridoxal 5'-phosphate serves as cofactor.

It localises to the cytoplasm. The catalysed reaction is (6R)-5,10-methylene-5,6,7,8-tetrahydrofolate + glycine + H2O = (6S)-5,6,7,8-tetrahydrofolate + L-serine. Its pathway is one-carbon metabolism; tetrahydrofolate interconversion. It functions in the pathway amino-acid biosynthesis; glycine biosynthesis; glycine from L-serine: step 1/1. Functionally, catalyzes the reversible interconversion of serine and glycine with tetrahydrofolate (THF) serving as the one-carbon carrier. This reaction serves as the major source of one-carbon groups required for the biosynthesis of purines, thymidylate, methionine, and other important biomolecules. Also exhibits THF-independent aldolase activity toward beta-hydroxyamino acids, producing glycine and aldehydes, via a retro-aldol mechanism. This chain is Serine hydroxymethyltransferase, found in Herminiimonas arsenicoxydans.